Consider the following 574-residue polypeptide: Membrane protein insertase YidC (574 aa).

The next 6 helical transmembrane spans lie at 6–26 (VFLIFAWLMVAALLWMEWGKE), 350–370 (VIDYSRFSIMAIIGQGLFWVL), 376–396 (FLHNWGWAIVGLVVLLRLVLY), 447–467 (GGCLPLLIQMPIFFALYWVLV), 491–511 (FILPALNIAIMWATQKLTPTP), and 525–545 (PLVFGAMMAFVPSGLVLYWVV).

This sequence belongs to the OXA1/ALB3/YidC family. Type 1 subfamily. Interacts with the Sec translocase complex via SecD. Specifically interacts with transmembrane segments of nascent integral membrane proteins during membrane integration.

The protein localises to the cell inner membrane. Required for the insertion and/or proper folding and/or complex formation of integral membrane proteins into the membrane. Involved in integration of membrane proteins that insert both dependently and independently of the Sec translocase complex, as well as at least some lipoproteins. Aids folding of multispanning membrane proteins. In Xanthomonas oryzae pv. oryzae (strain KACC10331 / KXO85), this protein is Membrane protein insertase YidC.